The sequence spans 157 residues: SsrA-binding protein (157 aa).

The interval 133–157 is disordered; sequence LHDKRESEKKRDWGREKGRLLRARG. A compositionally biased stretch (basic and acidic residues) spans 135–151; sequence DKRESEKKRDWGREKGR.

Belongs to the SmpB family.

It localises to the cytoplasm. Its function is as follows. Required for rescue of stalled ribosomes mediated by trans-translation. Binds to transfer-messenger RNA (tmRNA), required for stable association of tmRNA with ribosomes. tmRNA and SmpB together mimic tRNA shape, replacing the anticodon stem-loop with SmpB. tmRNA is encoded by the ssrA gene; the 2 termini fold to resemble tRNA(Ala) and it encodes a 'tag peptide', a short internal open reading frame. During trans-translation Ala-aminoacylated tmRNA acts like a tRNA, entering the A-site of stalled ribosomes, displacing the stalled mRNA. The ribosome then switches to translate the ORF on the tmRNA; the nascent peptide is terminated with the 'tag peptide' encoded by the tmRNA and targeted for degradation. The ribosome is freed to recommence translation, which seems to be the essential function of trans-translation. The protein is SsrA-binding protein of Bradyrhizobium sp. (strain ORS 278).